We begin with the raw amino-acid sequence, 381 residues long: Dual-specificity RNA methyltransferase RlmN (381 aa).

Glutamate 86 (proton acceptor) is an active-site residue. The region spanning 105-338 is the Radical SAM core domain; it reads RHARYTICVS…CTIRQSKGLD (234 aa). Cysteines 112 and 343 form a disulfide. The [4Fe-4S] cluster site is built by cysteine 119, cysteine 123, and cysteine 126. S-adenosyl-L-methionine contacts are provided by residues 169–170, serine 201, 224–226, and asparagine 300; these read GE and SLH. Catalysis depends on cysteine 343, which acts as the S-methylcysteine intermediate. Residues 351–381 are disordered; that stretch reads ENPKFRANVSGNSAAKTEEKPTNDKTNVSKK.

Belongs to the radical SAM superfamily. RlmN family. The cofactor is [4Fe-4S] cluster.

Its subcellular location is the cytoplasm. The enzyme catalyses adenosine(2503) in 23S rRNA + 2 reduced [2Fe-2S]-[ferredoxin] + 2 S-adenosyl-L-methionine = 2-methyladenosine(2503) in 23S rRNA + 5'-deoxyadenosine + L-methionine + 2 oxidized [2Fe-2S]-[ferredoxin] + S-adenosyl-L-homocysteine. It carries out the reaction adenosine(37) in tRNA + 2 reduced [2Fe-2S]-[ferredoxin] + 2 S-adenosyl-L-methionine = 2-methyladenosine(37) in tRNA + 5'-deoxyadenosine + L-methionine + 2 oxidized [2Fe-2S]-[ferredoxin] + S-adenosyl-L-homocysteine. Specifically methylates position 2 of adenine 2503 in 23S rRNA and position 2 of adenine 37 in tRNAs. m2A2503 modification seems to play a crucial role in the proofreading step occurring at the peptidyl transferase center and thus would serve to optimize ribosomal fidelity. This is Dual-specificity RNA methyltransferase RlmN from Campylobacter concisus (strain 13826).